Consider the following 219-residue polypeptide: 7-cyano-7-deazaguanine synthase (219 aa).

10 to 20 (FSGGQDSTTCL) is a binding site for ATP. Zn(2+) contacts are provided by cysteine 186, cysteine 195, cysteine 198, and cysteine 201.

Belongs to the QueC family. As to quaternary structure, homodimer. Zn(2+) is required as a cofactor.

It catalyses the reaction 7-carboxy-7-deazaguanine + NH4(+) + ATP = 7-cyano-7-deazaguanine + ADP + phosphate + H2O + H(+). The protein operates within purine metabolism; 7-cyano-7-deazaguanine biosynthesis. In terms of biological role, catalyzes the ATP-dependent conversion of 7-carboxy-7-deazaguanine (CDG) to 7-cyano-7-deazaguanine (preQ(0)). The polypeptide is 7-cyano-7-deazaguanine synthase (Bacillus velezensis (strain DSM 23117 / BGSC 10A6 / LMG 26770 / FZB42) (Bacillus amyloliquefaciens subsp. plantarum)).